A 212-amino-acid chain; its full sequence is Redox-sensing transcriptional repressor Rex (212 aa).

The segment at residues 17 to 56 (LYYRIFKRFNTDGIEKASSKQIADALGIDSATVRRDFSYF) is a DNA-binding region (H-T-H motif). 91–96 (GCGNIG) provides a ligand contact to NAD(+).

Belongs to the transcriptional regulatory Rex family. Homodimer.

It localises to the cytoplasm. Its function is as follows. Modulates transcription in response to changes in cellular NADH/NAD(+) redox state. This is Redox-sensing transcriptional repressor Rex from Streptococcus agalactiae serotype III (strain NEM316).